Here is a 304-residue protein sequence, read N- to C-terminus: RING-H2 finger protein ATL2 (304 aa).

Residues 30-50 (IMLSAIVILFFVVILMVFLHL) form a helical membrane-spanning segment. The RING-type; atypical zinc-finger motif lies at 119–161 (CAVCLSEFEESETGRVLPNCQHTFHVDCIDMWFHSHSTCPLCR). A disordered region spans residues 194-304 (EPSSSSGLTD…DIERGGEESR (111 aa)). Basic and acidic residues predominate over residues 227-244 (VPRRTFSEFEDELTRRDS). Residues 283 to 293 (PTLSCRIQMTE) are compositionally biased toward polar residues. The segment covering 295–304 (DIERGGEESR) has biased composition (basic and acidic residues).

It belongs to the RING-type zinc finger family. ATL subfamily. As to expression, preferentially expressed around the apical meristem region.

The protein resides in the membrane. The enzyme catalyses S-ubiquitinyl-[E2 ubiquitin-conjugating enzyme]-L-cysteine + [acceptor protein]-L-lysine = [E2 ubiquitin-conjugating enzyme]-L-cysteine + N(6)-ubiquitinyl-[acceptor protein]-L-lysine.. Its pathway is protein modification; protein ubiquitination. In terms of biological role, may be involved in the early steps of the plant defense signaling pathway. In Arabidopsis thaliana (Mouse-ear cress), this protein is RING-H2 finger protein ATL2 (ATL2).